Here is a 1138-residue protein sequence, read N- to C-terminus: uncharacterized protein (1138 aa).

Disordered regions lie at residues 985–1015 (EKKL…MAQE) and 1094–1138 (LVAT…QNKL). The span at 1110–1138 (DDDEYEKYDSGIEDIETDVDEEEEVQNKL) shows a compositional bias: acidic residues.

This is an uncharacterized protein from Ostreid herpesvirus 1 (isolate France) (OsHV-1).